Reading from the N-terminus, the 294-residue chain is ATP synthase gamma chain (294 aa).

The protein belongs to the ATPase gamma chain family. F-type ATPases have 2 components, CF(1) - the catalytic core - and CF(0) - the membrane proton channel. CF(1) has five subunits: alpha(3), beta(3), gamma(1), delta(1), epsilon(1). CF(0) has three main subunits: a, b and c.

The protein resides in the cell inner membrane. Produces ATP from ADP in the presence of a proton gradient across the membrane. The gamma chain is believed to be important in regulating ATPase activity and the flow of protons through the CF(0) complex. The protein is ATP synthase gamma chain of Rhizorhabdus wittichii (strain DSM 6014 / CCUG 31198 / JCM 15750 / NBRC 105917 / EY 4224 / RW1) (Sphingomonas wittichii).